A 672-amino-acid chain; its full sequence is Poly-beta-1,6-N-acetyl-D-glucosamine N-deacetylase (672 aa).

The first 20 residues, 1–20, serve as a signal peptide directing secretion; that stretch reads MLRNGNKYLLMLVSIIMLTA. The N-palmitoyl cysteine moiety is linked to residue Cys21. Residue Cys21 is the site of S-diacylglycerol cysteine attachment. A NodB homology domain is found at 107–349; it reads KAVVLTFDDG…IQRVKDMQIS (243 aa).

Belongs to the polysaccharide deacetylase family.

It localises to the cell outer membrane. Its function is as follows. Catalyzes the N-deacetylation of poly-beta-1,6-N-acetyl-D-glucosamine (PGA), a biofilm adhesin polysaccharide. N-deacetylation promotes PGA export through the PgaA porin. This Escherichia coli (strain K12) protein is Poly-beta-1,6-N-acetyl-D-glucosamine N-deacetylase (pgaB).